Reading from the N-terminus, the 293-residue chain is Protease HtpX (293 aa).

The next 2 membrane-spanning stretches (helical) occupy residues 4-24 (IALF…VLSL) and 34-54 (GLMI…LLMS). His139 serves as a coordination point for Zn(2+). The active site involves Glu140. His143 contributes to the Zn(2+) binding site. Helical transmembrane passes span 158 to 178 (VVNT…AGFM) and 193 to 213 (LIYF…ASII). Residue Glu222 participates in Zn(2+) binding.

It belongs to the peptidase M48B family. The cofactor is Zn(2+).

It is found in the cell inner membrane. This chain is Protease HtpX, found in Escherichia fergusonii (strain ATCC 35469 / DSM 13698 / CCUG 18766 / IAM 14443 / JCM 21226 / LMG 7866 / NBRC 102419 / NCTC 12128 / CDC 0568-73).